The chain runs to 356 residues: Glycerol-1-phosphate dehydrogenase [NAD(P)+] (356 aa).

NAD(+) contacts are provided by residues 103 to 107 and 125 to 128; these read GRSID and TAAS. Position 130 (Asp-130) interacts with substrate. Ser-134 contributes to the NAD(+) binding site. Asp-177 is a binding site for substrate. 2 residues coordinate Zn(2+): Asp-177 and His-257. His-261 provides a ligand contact to substrate. His-273 contributes to the Zn(2+) binding site.

Belongs to the glycerol-1-phosphate dehydrogenase family. The cofactor is Zn(2+).

The protein resides in the cytoplasm. The catalysed reaction is sn-glycerol 1-phosphate + NAD(+) = dihydroxyacetone phosphate + NADH + H(+). It catalyses the reaction sn-glycerol 1-phosphate + NADP(+) = dihydroxyacetone phosphate + NADPH + H(+). Its pathway is membrane lipid metabolism; glycerophospholipid metabolism. Functionally, catalyzes the NAD(P)H-dependent reduction of dihydroxyacetonephosphate (DHAP or glycerone phosphate) to glycerol 1-phosphate (G1P). The G1P thus generated is used as the glycerophosphate backbone of phospholipids in the cellular membranes of Archaea. This is Glycerol-1-phosphate dehydrogenase [NAD(P)+] from Methanosarcina acetivorans (strain ATCC 35395 / DSM 2834 / JCM 12185 / C2A).